A 631-amino-acid polypeptide reads, in one-letter code: Anthrax toxin receptor-like (631 aa).

The first 27 residues, 1–27 (MGSHESLGPYFLVFLLLLLLPPPLFRA), serve as a signal peptide directing secretion. Over 28-353 (GSLRYHGPDW…TSTTCGIFRN (326 aa)) the chain is Extracellular. Positions 76 to 246 (DLYFILDKSG…KALRSTIDAL (171 aa)) constitute a VWFA domain. Positions 84, 86, and 150 each coordinate a divalent metal cation. Residues 354–374 (WLYFVPLLLLVPLLLCCVWRL) traverse the membrane as a helical segment. Topologically, residues 375 to 631 (CRKQTVKEPP…LSLPPSEPNF (257 aa)) are cytoplasmic. Positions 382–413 (EPPPVQKPEKEPEQEKPPSPPPPPPPPPPPLP) are disordered. Residues 388–397 (KPEKEPEQEK) are compositionally biased toward basic and acidic residues. Over residues 398–413 (PPSPPPPPPPPPPPLP) the composition is skewed to pro residues.

The protein belongs to the ATR family.

Its subcellular location is the membrane. The polypeptide is Anthrax toxin receptor-like (ANTXRL) (Homo sapiens (Human)).